Consider the following 58-residue polypeptide: Ribulose bisphosphate carboxylase large chain (58 aa).

The propeptide occupies 1–2 (MS). N-acetylproline is present on proline 3. Lysine 14 carries the N6,N6,N6-trimethyllysine modification.

Belongs to the RuBisCO large chain family. Type I subfamily. As to quaternary structure, heterohexadecamer of 8 large chains and 8 small chains.

Its subcellular location is the plastid. It localises to the chloroplast. The enzyme catalyses 2 (2R)-3-phosphoglycerate + 2 H(+) = D-ribulose 1,5-bisphosphate + CO2 + H2O. It carries out the reaction D-ribulose 1,5-bisphosphate + O2 = 2-phosphoglycolate + (2R)-3-phosphoglycerate + 2 H(+). RuBisCO catalyzes two reactions: the carboxylation of D-ribulose 1,5-bisphosphate, the primary event in carbon dioxide fixation, as well as the oxidative fragmentation of the pentose substrate in the photorespiration process. Both reactions occur simultaneously and in competition at the same active site. The polypeptide is Ribulose bisphosphate carboxylase large chain (rbcL) (Weinmannia silvicola (Towai)).